Here is a 275-residue protein sequence, read N- to C-terminus: uncharacterized protein (275 aa).

3 consecutive transmembrane segments (helical) span residues 15–35 (LFLPLLGGSVSGSLFGRFLGS), 39–59 (AIMITTCVSFCALVVFIFGLF), and 70–90 (ILYLFLVGFVLSLIRIKVVYL). The disordered stretch occupies residues 140 to 191 (SSKTDMDSQVAEAPQTEEGEPSVNQVPQEAGASHRVGPYQDQGLATDRNGNP).

It localises to the mitochondrion membrane. This is an uncharacterized protein from Arabidopsis thaliana (Mouse-ear cress).